Here is a 370-residue protein sequence, read N- to C-terminus: Protein-glutamate methylesterase/protein-glutamine glutaminase 3 (370 aa).

The region spanning 3 to 119 (KVLIVDDSAL…SLNVSRIERE (117 aa)) is the Response regulatory domain. Residue aspartate 53 is modified to 4-aspartylphosphate. In terms of domain architecture, CheB-type methylesterase spans 166–360 (SLTEIGVVLI…GQLNAWMSRT (195 aa)). Active-site residues include serine 178, histidine 205, and aspartate 302.

The protein belongs to the CheB family. Phosphorylated by CheA. Phosphorylation of the N-terminal regulatory domain activates the methylesterase activity.

It is found in the cytoplasm. It catalyses the reaction [protein]-L-glutamate 5-O-methyl ester + H2O = L-glutamyl-[protein] + methanol + H(+). It carries out the reaction L-glutaminyl-[protein] + H2O = L-glutamyl-[protein] + NH4(+). Involved in chemotaxis. Part of a chemotaxis signal transduction system that modulates chemotaxis in response to various stimuli. Catalyzes the demethylation of specific methylglutamate residues introduced into the chemoreceptors (methyl-accepting chemotaxis proteins or MCP) by CheR. Also mediates the irreversible deamidation of specific glutamine residues to glutamic acid. This is Protein-glutamate methylesterase/protein-glutamine glutaminase 3 from Rhodospirillum rubrum (strain ATCC 11170 / ATH 1.1.1 / DSM 467 / LMG 4362 / NCIMB 8255 / S1).